The chain runs to 483 residues: UDP-N-acetylmuramate--L-alanine ligase (483 aa).

112-118 (GTHGKTT) provides a ligand contact to ATP.

Belongs to the MurCDEF family.

Its subcellular location is the cytoplasm. The catalysed reaction is UDP-N-acetyl-alpha-D-muramate + L-alanine + ATP = UDP-N-acetyl-alpha-D-muramoyl-L-alanine + ADP + phosphate + H(+). Its pathway is cell wall biogenesis; peptidoglycan biosynthesis. In terms of biological role, cell wall formation. This is UDP-N-acetylmuramate--L-alanine ligase from Ralstonia nicotianae (strain ATCC BAA-1114 / GMI1000) (Ralstonia solanacearum).